Here is a 316-residue protein sequence, read N- to C-terminus: tRNA-cytidine(32) 2-sulfurtransferase (316 aa).

The PP-loop motif signature appears at 58 to 63; it reads SGGKDS. [4Fe-4S] cluster is bound by residues cysteine 133, cysteine 136, and cysteine 224.

Belongs to the TtcA family. Homodimer. Mg(2+) serves as cofactor. The cofactor is [4Fe-4S] cluster.

The protein localises to the cytoplasm. It carries out the reaction cytidine(32) in tRNA + S-sulfanyl-L-cysteinyl-[cysteine desulfurase] + AH2 + ATP = 2-thiocytidine(32) in tRNA + L-cysteinyl-[cysteine desulfurase] + A + AMP + diphosphate + H(+). Its pathway is tRNA modification. Its function is as follows. Catalyzes the ATP-dependent 2-thiolation of cytidine in position 32 of tRNA, to form 2-thiocytidine (s(2)C32). The sulfur atoms are provided by the cysteine/cysteine desulfurase (IscS) system. This chain is tRNA-cytidine(32) 2-sulfurtransferase, found in Aromatoleum aromaticum (strain DSM 19018 / LMG 30748 / EbN1) (Azoarcus sp. (strain EbN1)).